Reading from the N-terminus, the 590-residue chain is Melanophilin (590 aa).

The RabBD domain maps to 4-124 (RLDLSTLTDE…IGSLEWYYQH (121 aa)). The segment at 64–107 (CARCLQPYRLLLNSRRQCLECSLFVCKSCSHAHPEEQGWLCDPC) adopts an FYVE-type zinc-finger fold. Disordered stretches follow at residues 147-182 (GGGG…PLNS), 215-276 (SVPE…AELD), 311-335 (DTSD…ARTV), 361-472 (VLPP…SEIS), and 485-590 (GLTV…AQQP). Positions 154–172 (SLEEGNGDSEQTDEDGDLD) are enriched in acidic residues. The segment covering 215–238 (SVPESAHSLQSLSGEPYSEDTTSL) has biased composition (polar residues). A coiled-coil region spans residues 339 to 485 (QILELNKRMS…SRIAALRAAG (147 aa)). A compositionally biased stretch (low complexity) spans 391 to 401 (LTSNISGSSTS). Basic and acidic residues predominate over residues 424–433 (GHMETQERNP).

Binds RAB27A that has been activated by GTP-binding via its N-terminus. Binds MYO5A via its C-terminal coiled coil domain. As to expression, highly expressed in embryos at day 7; not detectable at day 11. Highly expressed in adult stomach; detected at lower levels in kidney, lung, skin and small intestine. Detected in melanocytes.

Its subcellular location is the melanosome. Functionally, rab effector protein involved in melanosome transport. Serves as link between melanosome-bound RAB27A and the motor protein MYO5A. The polypeptide is Melanophilin (Mlph) (Mus musculus (Mouse)).